The chain runs to 155 residues: uncharacterized protein (155 aa).

The 148-residue stretch at 7 to 154 (LQINYKTLEE…VWLPESVELQ (148 aa)) folds into the N-acetyltransferase domain.

This is an uncharacterized protein from Brevibacillus brevis (strain 47 / JCM 6285 / NBRC 100599).